Consider the following 110-residue polypeptide: U1-lycotoxin-Ls1ee (110 aa).

The first 20 residues, 1-20, serve as a signal peptide directing secretion; that stretch reads MKFVLLFGVLLVTLFSYSSA. Residues 21–44 constitute a propeptide that is removed on maturation; the sequence is EMLDDFDQADEDELLSLIEKEEAR. 4 disulfide bridges follow: Cys47-Cys62, Cys54-Cys71, Cys61-Cys89, and Cys73-Cys87.

The protein belongs to the neurotoxin 19 (CSTX) family. 03 subfamily. Expressed by the venom gland.

It is found in the secreted. This Lycosa singoriensis (Wolf spider) protein is U1-lycotoxin-Ls1ee.